The sequence spans 158 residues: Transcription elongation factor GreA (158 aa).

The tract at residues 41-61 (GDLSENAEYHAAKEDQSHNEG) is disordered. Positions 51–74 (AAKEDQSHNEGRIAELEDKLARAE) form a coiled coil.

This sequence belongs to the GreA/GreB family.

Its function is as follows. Necessary for efficient RNA polymerase transcription elongation past template-encoded arresting sites. The arresting sites in DNA have the property of trapping a certain fraction of elongating RNA polymerases that pass through, resulting in locked ternary complexes. Cleavage of the nascent transcript by cleavage factors such as GreA or GreB allows the resumption of elongation from the new 3'terminus. GreA releases sequences of 2 to 3 nucleotides. This chain is Transcription elongation factor GreA, found in Nitrobacter hamburgensis (strain DSM 10229 / NCIMB 13809 / X14).